Reading from the N-terminus, the 537-residue chain is Quadr-hydrophobin (537 aa).

An N-terminal signal peptide occupies residues 1–17; the sequence is MKFITVAAALFASTSLA. 4 hydrophobin regions span residues 63 to 199, 200 to 299, 300 to 421, and 422 to 537; these read GGNP…QNPI, GGNP…ENPT, GGNP…QDPL, and GGNP…RAII. Residues Asn70 and Asn113 are each glycosylated (N-linked (GlcNAc...) asparagine). 16 cysteine pairs are disulfide-bonded: Cys134-Cys183, Cys144-Cys174, Cys145-Cys157, Cys184-Cys195, Cys234-Cys283, Cys244-Cys274, Cys245-Cys257, Cys284-Cys295, Cys356-Cys405, Cys366-Cys396, Cys367-Cys379, Cys406-Cys417, Cys471-Cys520, Cys481-Cys511, Cys482-Cys494, and Cys521-Cys532.

The protein belongs to the cerato-ulmin hydrophobin family. In terms of assembly, homotetramer. Further self-assembles to form highly ordered films at water-air interfaces through intermolecular interactions.

Its subcellular location is the secreted. The protein resides in the cell wall. Functionally, aerial growth, conidiation, and dispersal of filamentous fungi in the environment rely upon a capability of their secreting small amphipathic proteins called hydrophobins (HPBs) with low sequence identity. Class I can self-assemble into an outermost layer of rodlet bundles on aerial cell surfaces, conferring cellular hydrophobicity that supports fungal growth, development and dispersal; whereas Class II form highly ordered films at water-air interfaces through intermolecular interactions but contribute nothing to the rodlet structure. The sequence is that of Quadr-hydrophobin from Cordyceps militaris (Caterpillar fungus).